Here is a 346-residue protein sequence, read N- to C-terminus: Phosphoribosylformylglycinamidine cyclo-ligase (346 aa).

Belongs to the AIR synthase family.

Its subcellular location is the cytoplasm. It catalyses the reaction 2-formamido-N(1)-(5-O-phospho-beta-D-ribosyl)acetamidine + ATP = 5-amino-1-(5-phospho-beta-D-ribosyl)imidazole + ADP + phosphate + H(+). It functions in the pathway purine metabolism; IMP biosynthesis via de novo pathway; 5-amino-1-(5-phospho-D-ribosyl)imidazole from N(2)-formyl-N(1)-(5-phospho-D-ribosyl)glycinamide: step 2/2. This chain is Phosphoribosylformylglycinamidine cyclo-ligase, found in Bacillus pumilus (strain SAFR-032).